The chain runs to 94 residues: Co-chaperonin GroES (94 aa).

This sequence belongs to the GroES chaperonin family. In terms of assembly, heptamer of 7 subunits arranged in a ring. Interacts with the chaperonin GroEL.

The protein localises to the cytoplasm. Its function is as follows. Together with the chaperonin GroEL, plays an essential role in assisting protein folding. The GroEL-GroES system forms a nano-cage that allows encapsulation of the non-native substrate proteins and provides a physical environment optimized to promote and accelerate protein folding. GroES binds to the apical surface of the GroEL ring, thereby capping the opening of the GroEL channel. The chain is Co-chaperonin GroES from Bacillus pumilus (strain SAFR-032).